We begin with the raw amino-acid sequence, 206 residues long: Ribosomal RNA small subunit methyltransferase G (206 aa).

S-adenosyl-L-methionine contacts are provided by residues G71, F76, 125–126 (IE), and R139.

Belongs to the methyltransferase superfamily. RNA methyltransferase RsmG family.

The protein localises to the cytoplasm. The catalysed reaction is guanosine(527) in 16S rRNA + S-adenosyl-L-methionine = N(7)-methylguanosine(527) in 16S rRNA + S-adenosyl-L-homocysteine. Functionally, specifically methylates the N7 position of guanine in position 527 of 16S rRNA. This is Ribosomal RNA small subunit methyltransferase G from Cereibacter sphaeroides (strain ATCC 17029 / ATH 2.4.9) (Rhodobacter sphaeroides).